A 278-amino-acid polypeptide reads, in one-letter code: ABC transporter I family member 11, chloroplastic (278 aa).

The N-terminal 49 residues, 1–49 (MAVSTFSSPTPVFGIAEPPASFSSTAIGWKQPLRFRRTKKPRVISCDYS), are a transit peptide targeting the chloroplast. The ABC transporter domain maps to 51–278 (IEVRDVCYRP…GVLVAERPPL (228 aa)). 85–92 (GKSGSGKT) serves as a coordination point for ATP.

It belongs to the ABC transporter superfamily. ABCI family.

The protein resides in the plastid. It is found in the chloroplast. The sequence is that of ABC transporter I family member 11, chloroplastic (ABCI11) from Arabidopsis thaliana (Mouse-ear cress).